The chain runs to 856 residues: Wall-associated receptor kinase 17 (856 aa).

Residues 1-42 (MPSRSPACRPRGRNRRSAADAVARPLALALILVSTLPRAAHS) form the signal peptide. Residues Asn-171 and Asn-234 are each glycosylated (N-linked (GlcNAc...) asparagine). Residues 297-334 (FEKLCKYGTCVDAPTGAGYLCKCPSGYDGNPYVSDGCQ) form the EGF-like 1 domain. Cystine bridges form between Cys-301/Cys-306, Cys-319/Cys-333, Cys-339/Cys-353, Cys-347/Cys-362, and Cys-364/Cys-379. In terms of domain architecture, EGF-like 2; calcium-binding spans 335 to 380 (DINECRNYNSNNCTYQNLCNNTLGGYTCSCPENNIGDGYRTGTGCN). N-linked (GlcNAc...) asparagine glycosylation is found at Asn-346 and Asn-354. Asn-380 is a glycosylation site (N-linked (GlcNAc...) asparagine). A helical transmembrane segment spans residues 452-470 (VLGVSLVLMVTTTTAASCY). Residues 527-805 (YSESRILGRG…VLQELRRSFT (279 aa)) form the Protein kinase domain. ATP-binding positions include 533 to 541 (LGRGGQGTV) and Lys-555. The Proton acceptor role is filled by Asp-652. A disordered region spans residues 816–844 (SIQENSEQEEKHLHESRSIPSLQSSEVST). Over residues 823–832 (QEEKHLHESR) the composition is skewed to basic and acidic residues. Over residues 833 to 844 (SIPSLQSSEVST) the composition is skewed to polar residues.

It belongs to the protein kinase superfamily. Ser/Thr protein kinase family. In terms of assembly, interacts with WAK17 isoform 2; the interaction is direct. Interacts with LRR5; the interaction is direct. As to quaternary structure, interacts with WAK17 isoform 1; the interaction is direct. (Microbial infection) Interacts with G.zeae CFEM1 (via CFEM domain); the interaction is direct. Interacts with G.zeae CFEMN1; the interaction is direct. Interacts with G.zeae CFEM5; the interaction is direct. Requires Mn(2+) as cofactor. Mg(2+) is required as a cofactor.

It localises to the cell membrane. It carries out the reaction L-seryl-[protein] + ATP = O-phospho-L-seryl-[protein] + ADP + H(+). The catalysed reaction is L-threonyl-[protein] + ATP = O-phospho-L-threonyl-[protein] + ADP + H(+). In terms of biological role, kinase that contributes to activation of the hypersensitive response, a form of programmed cell death, upon fungal infection. Secreted protein that contributes to activation of the hypersensitive response, a form of programmed cell death, upon fungal infection. May sense the presence of fungal material and relay the signal to WAK17 isoform 1. This is Wall-associated receptor kinase 17 from Zea mays (Maize).